The sequence spans 249 residues: Proline-rich antigen (249 aa).

2 stretches are compositionally biased toward pro residues: residues 1 to 20 (MTDQ…PPPG) and 38 to 87 (YPPP…PPGP). The disordered stretch occupies residues 1-87 (MTDQPPPSGS…GAYAPPPPGP (87 aa)). The stretch at 34 to 43 (LGSAYPPPTA) is one 1-1; approximate repeat. Positions 34–85 (LGSAYPPPTAPPVGGSYPPPPPPGGSYPPPPPPGGSYPPPPPSTGAYAPPPP) are 5 X 10 AA tandem repeats of [PV]-G-G-S-Y-P-P-P-P-P. 3 repeat units span residues 46–55 (VGGSYPPPPP), 56–65 (PGGSYPPPPP), and 66–75 (PGGSYPPPPP). The 1-5; approximate repeat unit spans residues 76-85 (STGAYAPPPP). Positions 99–242 (FWVTRVLAYV…KRQTLADKIM (144 aa)) constitute an RDD domain. Tandem repeats lie at residues 101–123 (VTRV…IGML) and 134–156 (VTDI…IGML). Residues 101–156 (VTRVLAYVIDNIPATVLLGIGMLIQTLTKQEACVTDITQYNVNQYCATQPTGIGML) form a 2 X 23 AA approximate repeats region. Transmembrane regions (helical) follow at residues 104 to 124 (VLAY…GMLI), 151 to 171 (TGIG…YLVW), and 212 to 232 (LAHF…LWDS).

Belongs to the mycobacterial Pra family.

Its subcellular location is the cell membrane. The protein is Proline-rich antigen (ag36) of Mycobacterium leprae (strain TN).